The following is a 290-amino-acid chain: Carbonic anhydrase-related protein (290 aa).

A disordered region spans residues 1-26 (MADLSFIEDTVAFPEKEEDEEEEEEG). The residue at position 5 (Ser-5) is a Phosphoserine. Residues 16–26 (KEEDEEEEEEG) show a composition bias toward acidic residues. The Alpha-carbonic anhydrase domain occupies 27 to 289 (VEWGYEEGVE…LSDRVIRAAF (263 aa)). His-87 acts as the Proton donor/acceptor in catalysis. The Zn(2+) site is built by His-118 and His-141.

Belongs to the alpha-carbonic anhydrase family.

Functionally, does not have a carbonic anhydrase catalytic activity. This chain is Carbonic anhydrase-related protein (CA8), found in Homo sapiens (Human).